Consider the following 228-residue polypeptide: Aquaporin Z (228 aa).

2 helical membrane passes run 1-21 (MLNK…GGCG) and 23-43 (AILA…ALAF). Residues 63–65 (NPA) carry the NPA 1 motif. The next 3 helical transmembrane spans lie at 82–102 (IPYW…LYVI), 129–149 (MMAG…IILG), and 154–174 (LAPA…IHLV). The short motif at 184–186 (NPA) is the NPA 2 element. The chain crosses the membrane as a helical span at residues 205 to 225 (LFWVAPLVGAVIGAIIWKGLL).

Belongs to the MIP/aquaporin (TC 1.A.8) family. Homotetramer.

It is found in the cell inner membrane. The enzyme catalyses H2O(in) = H2O(out). Functionally, channel that permits osmotically driven movement of water in both directions. It is involved in the osmoregulation and in the maintenance of cell turgor during volume expansion in rapidly growing cells. It mediates rapid entry or exit of water in response to abrupt changes in osmolarity. The protein is Aquaporin Z of Brucella melitensis biotype 1 (strain ATCC 23456 / CCUG 17765 / NCTC 10094 / 16M).